We begin with the raw amino-acid sequence, 111 residues long: Fertilization-influencing membrane protein (111 aa).

The N-terminal stretch at 1–23 is a signal peptide; it reads MKLWLWVAVGVWMLMAELGTIET. A helical transmembrane segment spans residues 85–105; sequence ILVGTLVVAFFFLLFQFCLHV.

In terms of tissue distribution, testis-specific.

It is found in the cell membrane. The protein resides in the secreted. Functionally, plays a role in sperm-oocyte fusion process during fertilization. The polypeptide is Fertilization-influencing membrane protein (Mus musculus (Mouse)).